Reading from the N-terminus, the 205-residue chain is Octanoyltransferase (205 aa).

In terms of domain architecture, BPL/LPL catalytic spans 30–205 (NSADELVWLL…ILKKEFYKIF (176 aa)). Substrate is bound by residues 68–75 (RGGKHTYH), 140–142 (AFG), and 153–155 (GIA). Cysteine 171 functions as the Acyl-thioester intermediate in the catalytic mechanism.

This sequence belongs to the LipB family.

It localises to the cytoplasm. It carries out the reaction octanoyl-[ACP] + L-lysyl-[protein] = N(6)-octanoyl-L-lysyl-[protein] + holo-[ACP] + H(+). It functions in the pathway protein modification; protein lipoylation via endogenous pathway; protein N(6)-(lipoyl)lysine from octanoyl-[acyl-carrier-protein]: step 1/2. Catalyzes the transfer of endogenously produced octanoic acid from octanoyl-acyl-carrier-protein onto the lipoyl domains of lipoate-dependent enzymes. Lipoyl-ACP can also act as a substrate although octanoyl-ACP is likely to be the physiological substrate. This is Octanoyltransferase from Wolbachia pipientis wMel.